The following is a 627-amino-acid chain: Altered inheritance of mitochondria protein 9, mitochondrial (627 aa).

Residues 1–43 (MIRYTVAGHSRRCVVGASKRVGAIKCITVAATKRFISNKPNEV) constitute a mitochondrion transit peptide.

This sequence belongs to the AIM9 family.

The protein localises to the mitochondrion. The polypeptide is Altered inheritance of mitochondria protein 9, mitochondrial (AIM9) (Saccharomyces cerevisiae (strain ATCC 204508 / S288c) (Baker's yeast)).